The chain runs to 663 residues: DNA ligase (663 aa).

NAD(+) contacts are provided by residues 31–35 (DFEYD), 80–81 (SL), and Glu-110. Lys-112 acts as the N6-AMP-lysine intermediate in catalysis. Residues Arg-133, Glu-168, Lys-284, and Lys-308 each coordinate NAD(+). 4 residues coordinate Zn(2+): Cys-402, Cys-405, Cys-420, and Cys-425. The BRCT domain maps to 586–663 (IKDNRFEGKT…DEDKFRKMIE (78 aa)).

It belongs to the NAD-dependent DNA ligase family. LigA subfamily. Mg(2+) is required as a cofactor. Requires Mn(2+) as cofactor.

It catalyses the reaction NAD(+) + (deoxyribonucleotide)n-3'-hydroxyl + 5'-phospho-(deoxyribonucleotide)m = (deoxyribonucleotide)n+m + AMP + beta-nicotinamide D-nucleotide.. Its function is as follows. DNA ligase that catalyzes the formation of phosphodiester linkages between 5'-phosphoryl and 3'-hydroxyl groups in double-stranded DNA using NAD as a coenzyme and as the energy source for the reaction. It is essential for DNA replication and repair of damaged DNA. The sequence is that of DNA ligase from Acetivibrio thermocellus (strain ATCC 27405 / DSM 1237 / JCM 9322 / NBRC 103400 / NCIMB 10682 / NRRL B-4536 / VPI 7372) (Clostridium thermocellum).